A 154-amino-acid polypeptide reads, in one-letter code: Transcriptional repressor NrdR (154 aa).

A zinc finger lies at 3 to 34 (CPFCGHSNTQVLDTRMSEDGDAVRRRRRCEAC). An ATP-cone domain is found at 49–139 (PAIVKKNGSR…VYRSFEDVAE (91 aa)).

This sequence belongs to the NrdR family. The cofactor is Zn(2+).

Functionally, negatively regulates transcription of bacterial ribonucleotide reductase nrd genes and operons by binding to NrdR-boxes. This Cupriavidus pinatubonensis (strain JMP 134 / LMG 1197) (Cupriavidus necator (strain JMP 134)) protein is Transcriptional repressor NrdR.